A 344-amino-acid polypeptide reads, in one-letter code: [LysW]-L-2-aminoadipate 6-phosphate reductase (344 aa).

Residues 12 to 15 (SGYA), 36 to 38 (SRR), and Leu-75 contribute to the NADP(+) site. The active site involves Cys-148. The NADP(+) site is built by Ser-180, Ala-184, and Asn-312.

The protein belongs to the NAGSA dehydrogenase family. Type 1 subfamily. LysY sub-subfamily. As to quaternary structure, homotetramer. Interacts with LysW. May form a ternary complex with LysW and LysZ.

The protein localises to the cytoplasm. It carries out the reaction [amino-group carrier protein]-C-terminal-N-(1-carboxy-5-oxopentan-1-yl)-L-glutamine + phosphate + NADP(+) = [amino-group carrier protein]-C-terminal-N-(1-carboxy-5-phosphooxy-5-oxopentan-1-yl)-L-glutamine + NADPH + H(+). It participates in amino-acid biosynthesis; L-lysine biosynthesis via AAA pathway; L-lysine from L-alpha-aminoadipate (Thermus route): step 3/5. Catalyzes the NADPH-dependent reduction of [LysW]-aminoadipate 6-phosphate to yield [LysW]-aminoadipate 6-semialdehyde. This chain is [LysW]-L-2-aminoadipate 6-phosphate reductase, found in Thermus thermophilus (strain ATCC BAA-163 / DSM 7039 / HB27).